The primary structure comprises 428 residues: Probable G-protein coupled receptor (428 aa).

At Met1–Asp46 the chain is on the extracellular side. N-linked (GlcNAc...) asparagine glycosylation is present at Asn18. The helical transmembrane segment at Leu47–Val67 threads the bilayer. At Met68–Cys93 the chain is on the cytoplasmic side. The helical transmembrane segment at Ala94–Phe114 threads the bilayer. Residues Thr115–Gln120 are Extracellular-facing. The chain crosses the membrane as a helical span at residues Val121–Ser141. Residues Val142–Leu162 are Cytoplasmic-facing. Residues Val163–Phe183 form a helical membrane-spanning segment. At Gly184 to Gly210 the chain is on the extracellular side. Residues Val211–Val231 traverse the membrane as a helical segment. Residues Tyr232–Ala293 lie on the Cytoplasmic side of the membrane. Residues Ala294–Phe314 traverse the membrane as a helical segment. Topologically, residues His315–Ala428 are extracellular. The span at Ser398 to Asn414 shows a compositional bias: polar residues. Residues Ser398–Ala428 form a disordered region.

It belongs to the G-protein coupled receptor 1 family.

Its subcellular location is the cell membrane. The polypeptide is Probable G-protein coupled receptor (Oryzias latipes (Japanese rice fish)).